Here is a 159-residue protein sequence, read N- to C-terminus: Early E3 18.5 kDa glycoprotein (159 aa).

The N-terminal stretch at 1-17 (MRYMILGLLALAAVCSA) is a signal peptide. Residues 18–123 (AKKVEFKEPA…PPQKCLENTG (106 aa)) lie on the Lumenal side of the membrane. 2 cysteine pairs are disulfide-bonded: cysteine 28/cysteine 45 and cysteine 39/cysteine 100. Residues asparagine 29 and asparagine 78 are each glycosylated (N-linked (GlcNAc...) asparagine; by host). Residues 124 to 144 (TFCSTALLITALALVCTLLYL) form a helical membrane-spanning segment. Residues 145–159 (KYKSRRSFIDEKKMP) are Cytoplasmic-facing. Positions 156 to 159 (KKMP) match the Di-lysine motif motif.

It belongs to the adenoviridae E19 family. In terms of processing, both disulfide bonds are absolutely critical for the interaction with MHC antigens. Post-translationally, N-glycosylated; high-mannose.

Its subcellular location is the host endoplasmic reticulum membrane. Its function is as follows. Binds and retains class I heavy chains in the endoplasmic reticulum during the early period of virus infection, thereby impairing their transport to the cell surface. Also delays the expression of class I alleles that it cannot affect by direct retention. Binds transporters associated with antigen processing (TAP) and acts as a tapasin inhibitor, preventing class I/TAP association. In consequence, infected cells are masked for immune recognition by cytotoxic T-lymphocytes. The protein is Early E3 18.5 kDa glycoprotein of Homo sapiens (Human).